The primary structure comprises 77 residues: Small nuclear ribonucleoprotein G (77 aa).

One can recognise a Sm domain in the interval 4–76 (AGAPDLKKYL…VIMIETLDKM (73 aa)).

This sequence belongs to the snRNP Sm proteins family. In terms of assembly, belongs to the 40S cdc5-associated complex (or cwf complex), a spliceosome sub-complex reminiscent of a late-stage spliceosome composed of the U2, U5 and U6 snRNAs and at least brr2, cdc5, cwf2/prp3, cwf3/syf1, cwf4/syf3, cwf5/ecm2, spp42/cwf6, cwf7/spf27, cwf8, cwf9, cwf10, cwf11, cwf12, prp45/cwf13, cwf14, cwf15, cwf16, cwf17, cwf18, cwf19, cwf20, cwf21, cwf22, cwf23, cwf24, cwf25, cwf26, cyp7/cwf27, cwf28, cwf29/ist3, lea1, msl1, prp5/cwf1, prp10, prp12/sap130, prp17, prp22, sap61, sap62, sap114, sap145, slu7, smb1, smd1, smd3, smf1, smg1 and syf2.

The protein localises to the nucleus. The protein resides in the cytoplasm. Its function is as follows. Plays a role in pre-mRNA splicing as a core component of the spliceosomal U1, U2, U4 and U5 small nuclear ribonucleoproteins (snRNPs), the building blocks of the spliceosome. The polypeptide is Small nuclear ribonucleoprotein G (smg1) (Schizosaccharomyces pombe (strain 972 / ATCC 24843) (Fission yeast)).